We begin with the raw amino-acid sequence, 112 residues long: Hydrogenase maturation factor HypA (112 aa).

A Ni(2+)-binding site is contributed by His-2. Residues Cys-73, Cys-76, Cys-88, and Cys-91 each coordinate Zn(2+).

The protein belongs to the HypA/HybF family.

Its function is as follows. Involved in the maturation of [NiFe] hydrogenases. Required for nickel insertion into the metal center of the hydrogenase. The chain is Hydrogenase maturation factor HypA from Synechococcus elongatus (strain ATCC 33912 / PCC 7942 / FACHB-805) (Anacystis nidulans R2).